A 298-amino-acid chain; its full sequence is Elongation factor Ts (298 aa).

The tract at residues 79-82 (TDFV) is involved in Mg(2+) ion dislocation from EF-Tu.

This sequence belongs to the EF-Ts family.

Its subcellular location is the cytoplasm. Associates with the EF-Tu.GDP complex and induces the exchange of GDP to GTP. It remains bound to the aminoacyl-tRNA.EF-Tu.GTP complex up to the GTP hydrolysis stage on the ribosome. This chain is Elongation factor Ts, found in Cereibacter sphaeroides (strain ATCC 17029 / ATH 2.4.9) (Rhodobacter sphaeroides).